The sequence spans 398 residues: Cell adhesion molecule 3 (398 aa).

The first 24 residues, 1–24 (MGAPAASLLLLLLLFACCWAPGGA), serve as a signal peptide directing secretion. One can recognise an Ig-like V-type domain in the interval 25-126 (NLSQDDSQPW…VRTAKSLVTV (102 aa)). The Extracellular segment spans residues 25–330 (NLSQDDSQPW…PVPSSSSTYH (306 aa)). Disulfide bonds link Cys-50/Cys-110, Cys-152/Cys-209, and Cys-254/Cys-299. 2 Ig-like C2-type domains span residues 130–228 (PQKP…QRIE) and 233–315 (PTAM…YTLN). Residue Asn-290 is glycosylated (N-linked (GlcNAc...) asparagine). A helical membrane pass occupies residues 331–351 (AIIGGIVAFIVFLLLIMLIFL). The Cytoplasmic portion of the chain corresponds to 352 to 398 (GHYLIRHKGTYLTHEAKGSDDAPDADTAIINAEGGQSGGDDKKEYFI). The disordered stretch occupies residues 367–398 (AKGSDDAPDADTAIINAEGGQSGGDDKKEYFI). Ser-388 bears the Phosphoserine mark.

Belongs to the nectin family. In terms of assembly, homodimer. Can form trans-heterodimers with NECTIN3. Interacts with EPB41L1, DLG3, PALS2 and CASK. As to expression, isoform 1 is expressed mainly in adult and fetal brain. Isoform 2 is highly expressed in adult brain and weakly expressed in placenta. In brain, Isoform 2 is highly expressed in cerebellum.

Its subcellular location is the cell membrane. It localises to the cell junction. Involved in cell-cell adhesion. Has both calcium-independent homophilic cell-cell adhesion activity and calcium-independent heterophilic cell-cell adhesion activity with IGSF4, NECTIN1 and NECTIN3. Interaction with EPB41L1 may regulate structure or function of cell-cell junctions. This chain is Cell adhesion molecule 3 (CADM3), found in Homo sapiens (Human).